Reading from the N-terminus, the 348-residue chain is Rhodopsin (348 aa).

Met1 bears the N-acetylmethionine mark. Topologically, residues Met1–Gln36 are extracellular. N-linked (GlcNAc...) asparagine glycosylation is found at Asn2 and Asn15. Residues Phe37 to Val61 form a helical membrane-spanning segment. Residues Thr62 to Asn73 are Cytoplasmic-facing. Residues Tyr74–Tyr96 traverse the membrane as a helical segment. Over Thr97–Cys110 the chain is Extracellular. A disulfide bridge connects residues Cys110 and Cys187. A helical transmembrane segment spans residues Asn111 to Ile133. The 'Ionic lock' involved in activated form stabilization motif lies at Glu134 to Tyr136. At Glu134–His152 the chain is on the cytoplasmic side. Residues Ala153–Val173 traverse the membrane as a helical segment. Residues Gly174–Ser202 lie on the Extracellular side of the membrane. Glu201 provides a ligand contact to Zn(2+). A helical transmembrane segment spans residues Phe203–Gly224. Residues Gln225–Arg252 are Cytoplasmic-facing. The chain crosses the membrane as a helical span at residues Met253–Tyr274. Residues Ile275 to Ile286 lie on the Extracellular side of the membrane. Gln279 provides a ligand contact to Zn(2+). Residues Leu287–Met308 form a helical membrane-spanning segment. An N6-(retinylidene)lysine modification is found at Lys296. The Cytoplasmic segment spans residues Met309–Ala348. Residues Cys322 and Cys323 are each lipidated (S-palmitoyl cysteine). An interaction with SAG region spans residues Glu330 to Ala348. Position 334 is a phosphoserine (Ser334). Thr335 and Thr336 each carry phosphothreonine. A Phosphoserine modification is found at Ser338. Phosphothreonine is present on residues Thr340 and Thr342. Ser343 bears the Phosphoserine mark.

Belongs to the G-protein coupled receptor 1 family. Opsin subfamily. As to quaternary structure, homodimer. May form a complex composed of RHO, GRK1 and RCVRN in a Ca(2+)-dependent manner; RCVRN prevents the interaction between GRK1 and RHO. Interacts with GRK1. Interacts (phosphorylated form) with SAG. Interacts with GNAT1. Interacts with GNAT3. SAG and G-proteins compete for a common binding site. Interacts with PRCD; the interaction promotes PRCD stability. Forms a complex with ASAP1 and ARF4. Forms a complex with ASAP1, RAB11A, Rabin8/RAB3IP, ARF4 and RAB11FIP3; the complex regulates Golgi-to-cilia rhodopsin/RHO transport in photoreceptors. Phosphorylated on some or all of the serine and threonine residues present in the C-terminal region. In terms of processing, contains one covalently linked retinal chromophore. Upon light absorption, the covalently bound 11-cis-retinal is converted to all-trans-retinal. After hydrolysis of the Schiff base and release of the covalently bound all-trans-retinal, active rhodopsin is regenerated by binding of a fresh molecule of 11-cis-retinal.

It is found in the membrane. It localises to the cell projection. The protein localises to the cilium. Its subcellular location is the photoreceptor outer segment. In terms of biological role, photoreceptor required for image-forming vision at low light intensity. Required for photoreceptor cell viability after birth. Light-induced isomerization of 11-cis to all-trans retinal triggers a conformational change that activates signaling via G-proteins. Subsequent receptor phosphorylation mediates displacement of the bound G-protein alpha subunit by the arrestin SAG and terminates signaling. The chain is Rhodopsin (RHO) from Loxodonta africana (African elephant).